The primary structure comprises 205 residues: Thymidylate kinase (205 aa).

An ATP-binding site is contributed by glycine 7 to threonine 14.

Belongs to the thymidylate kinase family.

It carries out the reaction dTMP + ATP = dTDP + ADP. Phosphorylation of dTMP to form dTDP in both de novo and salvage pathways of dTTP synthesis. This is Thymidylate kinase from Wolbachia sp. subsp. Brugia malayi (strain TRS).